Here is a 119-residue protein sequence, read N- to C-terminus: Ribonuclease P protein component (119 aa).

Belongs to the RnpA family. In terms of assembly, consists of a catalytic RNA component (M1 or rnpB) and a protein subunit.

It catalyses the reaction Endonucleolytic cleavage of RNA, removing 5'-extranucleotides from tRNA precursor.. Functionally, RNaseP catalyzes the removal of the 5'-leader sequence from pre-tRNA to produce the mature 5'-terminus. It can also cleave other RNA substrates such as 4.5S RNA. The protein component plays an auxiliary but essential role in vivo by binding to the 5'-leader sequence and broadening the substrate specificity of the ribozyme. The sequence is that of Ribonuclease P protein component from Listeria monocytogenes serotype 4a (strain HCC23).